The chain runs to 261 residues: Small ribosomal subunit protein uS2 (261 aa).

It belongs to the universal ribosomal protein uS2 family.

This chain is Small ribosomal subunit protein uS2, found in Paracoccus denitrificans (strain Pd 1222).